The primary structure comprises 136 residues: Large ribosomal subunit protein uL16 (136 aa).

It belongs to the universal ribosomal protein uL16 family. In terms of assembly, part of the 50S ribosomal subunit.

Its function is as follows. Binds 23S rRNA and is also seen to make contacts with the A and possibly P site tRNAs. This chain is Large ribosomal subunit protein uL16, found in Rickettsia akari (strain Hartford).